Consider the following 199-residue polypeptide: Octanoyltransferase (199 aa).

The BPL/LPL catalytic domain occupies 27–199 (SNSCDELWLL…FVQYFLTQFK (173 aa)). Substrate is bound by residues 66 to 73 (RGGQVTYH), 133 to 135 (SIG), and 146 to 148 (GIA). Catalysis depends on cysteine 164, which acts as the Acyl-thioester intermediate.

This sequence belongs to the LipB family.

The protein resides in the cytoplasm. The enzyme catalyses octanoyl-[ACP] + L-lysyl-[protein] = N(6)-octanoyl-L-lysyl-[protein] + holo-[ACP] + H(+). The protein operates within protein modification; protein lipoylation via endogenous pathway; protein N(6)-(lipoyl)lysine from octanoyl-[acyl-carrier-protein]: step 1/2. Functionally, catalyzes the transfer of endogenously produced octanoic acid from octanoyl-acyl-carrier-protein onto the lipoyl domains of lipoate-dependent enzymes. Lipoyl-ACP can also act as a substrate although octanoyl-ACP is likely to be the physiological substrate. The sequence is that of Octanoyltransferase from Legionella pneumophila (strain Corby).